A 185-amino-acid polypeptide reads, in one-letter code: Protein GrpE (185 aa).

Residues 1–37 (MSEEKQTPEQEAEVEAQEEAVQADTEEVTQDEQSAFQ) form a disordered region.

The protein belongs to the GrpE family. Homodimer.

The protein localises to the cytoplasm. Participates actively in the response to hyperosmotic and heat shock by preventing the aggregation of stress-denatured proteins, in association with DnaK and GrpE. It is the nucleotide exchange factor for DnaK and may function as a thermosensor. Unfolded proteins bind initially to DnaJ; upon interaction with the DnaJ-bound protein, DnaK hydrolyzes its bound ATP, resulting in the formation of a stable complex. GrpE releases ADP from DnaK; ATP binding to DnaK triggers the release of the substrate protein, thus completing the reaction cycle. Several rounds of ATP-dependent interactions between DnaJ, DnaK and GrpE are required for fully efficient folding. The polypeptide is Protein GrpE (Bacillus pumilus (strain SAFR-032)).